The sequence spans 149 residues: Large ribosomal subunit protein uL16 (149 aa).

The protein belongs to the universal ribosomal protein uL16 family. Part of the 50S ribosomal subunit.

Its function is as follows. Binds 23S rRNA and is also seen to make contacts with the A and possibly P site tRNAs. The chain is Large ribosomal subunit protein uL16 from Dehalococcoides mccartyi (strain ATCC BAA-2100 / JCM 16839 / KCTC 5957 / BAV1).